Consider the following 295-residue polypeptide: Protease HtpX (295 aa).

The next 2 helical transmembrane spans lie at 4 to 24 (ILLF…TLSL) and 41 to 61 (SSLL…SLFI). His147 serves as a coordination point for Zn(2+). Glu148 is an active-site residue. Residue His151 coordinates Zn(2+). The next 2 membrane-spanning stretches (helical) occupy residues 158 to 178 (VTLA…ARII) and 199 to 219 (VATI…VMWF). Position 224 (Glu224) interacts with Zn(2+).

Belongs to the peptidase M48B family. Zn(2+) is required as a cofactor.

Its subcellular location is the cell inner membrane. This is Protease HtpX from Pseudomonas putida (strain ATCC 47054 / DSM 6125 / CFBP 8728 / NCIMB 11950 / KT2440).